Reading from the N-terminus, the 98-residue chain is Putative protein adenylyltransferase MJ0128 (98 aa).

The GSX(10)DXD motif signature appears at 31-45; sequence GSYARNEQTEKSDID. Mg(2+) contacts are provided by Asp-43, Asp-45, and Asp-75.

Belongs to the MntA antitoxin family. Probably forms a complex with cognate toxin MJ0127. The cofactor is Mg(2+).

It catalyses the reaction L-tyrosyl-[protein] + ATP = O-(5'-adenylyl)-L-tyrosyl-[protein] + diphosphate. It carries out the reaction O-(5'-adenylyl)-L-tyrosyl-[protein] + ATP = O-[5'-(adenylyl-(5'-&gt;3')-adenylyl)]-L-tyrosyl-[protein] + diphosphate. Functionally, probable antitoxin component of a putative type VII toxin-antitoxin (TA) system. Neutralizes cognate toxic MJ0127 by di-AMPylation. The polypeptide is Putative protein adenylyltransferase MJ0128 (Methanocaldococcus jannaschii (strain ATCC 43067 / DSM 2661 / JAL-1 / JCM 10045 / NBRC 100440) (Methanococcus jannaschii)).